The primary structure comprises 854 residues: DNA mismatch repair protein MutS (854 aa).

Positions 1-21 (MTASDIQPTEPHTPPTPHADT) are disordered. 658–665 (GPNASGKS) contributes to the ATP binding site.

It belongs to the DNA mismatch repair MutS family.

Its function is as follows. This protein is involved in the repair of mismatches in DNA. It is possible that it carries out the mismatch recognition step. This protein has a weak ATPase activity. In Trichormus variabilis (strain ATCC 29413 / PCC 7937) (Anabaena variabilis), this protein is DNA mismatch repair protein MutS.